A 20-amino-acid chain; its full sequence is GMP synthase [glutamine-hydrolyzing] (20 aa).

The region spanning 1–20 (ALGDQLLSVFVDHTLVDEVA) is the GMPS ATP-PPase domain.

Homodimer.

The catalysed reaction is XMP + L-glutamine + ATP + H2O = GMP + L-glutamate + AMP + diphosphate + 2 H(+). It functions in the pathway purine metabolism; GMP biosynthesis; GMP from XMP (L-Gln route): step 1/1. Catalyzes the synthesis of GMP from XMP. The chain is GMP synthase [glutamine-hydrolyzing] (guaA) from Fructilactobacillus sanfranciscensis (Lactobacillus sanfranciscensis).